The primary structure comprises 241 residues: MAMRRFDPRQAQRGPQIRINQRIRVPEIRVIGDDGEMLGIMQTHEALRRAQEKGLDLVEVNPKADPPVCKILDFGKYKYDEKKKAREAKRKQSVVEIKEIKLRPKTDDHDLEFKTRAAHRFLGAGHKVKFTVRFRGREITHPEKAQEQLDWIVQHCEEIANVEVRPMMEQRTMTLMMAPKPAILQKVAQARAAAEKARQKAIQEGRAAPAQDDTEDEEIEKLERELEEQDDEDDDEAEATE.

The span at A193 to Q203 shows a compositional bias: basic and acidic residues. Positions A193–E241 are disordered. The span at D212–E241 shows a compositional bias: acidic residues.

Belongs to the IF-3 family. Monomer.

It is found in the cytoplasm. In terms of biological role, IF-3 binds to the 30S ribosomal subunit and shifts the equilibrium between 70S ribosomes and their 50S and 30S subunits in favor of the free subunits, thus enhancing the availability of 30S subunits on which protein synthesis initiation begins. The protein is Translation initiation factor IF-3 of Sorangium cellulosum (strain So ce56) (Polyangium cellulosum (strain So ce56)).